The following is a 218-amino-acid chain: MSNFILKPGEKLPQDKLEELKKINDAVKKTKNFSKYLIDLRKLFQIDEVQVTSESKLFLAGFLEGEASLNISTKKLATSKFGLVVDPEFNVTQHVNGVKVLYLALEVFKTGRIRHKSGSNATLVLTIDNRQSLEEKVIPFYEQYVVAFSSPEKVKRVANFKALLELFNNDAHQDLEQLVNKILPIWDQMRKQQGQSNEGFPNLEAAQDFARNYKKGIK.

Mg(2+)-binding residues include G65 and E66. The segment at 71–75 (ISTKK) is interaction with DNA. D86 contributes to the Mg(2+) binding site. 3 interaction with DNA regions span residues 90-94 (NVTQH), 114-116 (RHK), and 191-199 (KQQGQSNEG).

It belongs to the LAGLIDADG endonuclease family. As to quaternary structure, homodimer. Requires Mg(2+) as cofactor.

Its subcellular location is the plastid. It localises to the chloroplast. In terms of biological role, endonuclease involved in intron homing. Recognizes a degenerate sequence of 17-19 bp to produce a staggered cut 5 bp downstream from the CeLSU.5 intron insertion site. This Chlamydomonas moewusii (Chlamydomonas eugametos) protein is DNA endonuclease I-CeuI.